The sequence spans 695 residues: Follicle-stimulating hormone receptor (695 aa).

A signal peptide spans Met-1–Gly-17. Disulfide bonds link Cys-18–Cys-25 and Cys-23–Cys-32. An LRRNT domain is found at Cys-18–Arg-46. The Extracellular segment spans residues Cys-18–Arg-366. 9 LRR repeats span residues Ile-49–Leu-72, Glu-73–Leu-97, His-98–Asn-118, Leu-119–Ser-143, Leu-144–Ser-169, Phe-170–Gly-192, Thr-193–Gly-216, Ala-217–Asn-240, and Leu-241–Glu-259. N-linked (GlcNAc...) asparagine glycosylation is found at Asn-191 and Asn-199. Cystine bridges form between Cys-275–Cys-346, Cys-276–Cys-292, Cys-276–Cys-356, and Cys-292–Cys-338. N-linked (GlcNAc...) asparagine glycosylation is found at Asn-293 and Asn-318. Tyr-335 is subject to Sulfotyrosine. Residues Val-367–Leu-387 form a helical membrane-spanning segment. The Cytoplasmic segment spans residues Thr-388–Arg-398. The chain crosses the membrane as a helical span at residues Phe-399–Val-421. At Asp-422–Asp-443 the chain is on the extracellular side. A disulfide bond links Cys-442 and Cys-517. A helical transmembrane segment spans residues Ala-444 to Leu-465. The Cytoplasmic segment spans residues Glu-466 to His-485. The chain crosses the membrane as a helical span at residues Ala-486 to Ile-508. The Extracellular portion of the chain corresponds to Ser-509–Gln-528. Residues Leu-529–Ile-550 traverse the membrane as a helical segment. Topologically, residues His-551–Arg-573 are cytoplasmic. A helical membrane pass occupies residues Met-574–Leu-597. Residues Lys-598–Lys-608 are Extracellular-facing. A helical transmembrane segment spans residues Ile-609–Thr-630. The Cytoplasmic portion of the chain corresponds to Lys-631 to Asn-695.

The protein belongs to the G-protein coupled receptor 1 family. FSH/LSH/TSH subfamily. Homotrimer. Functions as a homotrimer binding the FSH hormone heterodimer composed of CGA and FSHB. Interacts with ARRB2. Interacts with APPL2; interaction is independent of follicle stimulating hormone stimulation. In terms of processing, sulfated. Post-translationally, N-glycosylated; indirectly required for FSH-binding, possibly via a conformational change that allows high affinity binding of hormone. As to expression, sertoli cells and ovarian granulosa cells.

It localises to the cell membrane. G protein-coupled receptor for follitropin, the follicle-stimulating hormone. Through cAMP production activates the downstream PI3K-AKT and ERK1/ERK2 signaling pathways. The sequence is that of Follicle-stimulating hormone receptor (FSHR) from Homo sapiens (Human).